We begin with the raw amino-acid sequence, 2442 residues long: CREB-binding protein (2442 aa).

Disordered stretches follow at residues 1–41 (MAEN…NDLP) and 74–179 (LRGG…CMNA). Position 2 is an N-acetylalanine (alanine 2). Residues 20–30 (PGFSANDSTDF) show a composition bias toward polar residues. Low complexity predominate over residues 80–90 (SSINPGIGNVS). Serine 121 is modified (phosphoserine). Positions 122–131 (PLSQGDSSAP) are enriched in polar residues. Serine 124 carries the post-translational modification Phosphoserine; by ATM. The span at 136 to 150 (QAASTSGPTPAASQA) shows a compositional bias: low complexity. Polar residues predominate over residues 151–172 (LNPQAQKQVGLATSSPATSQTG). Arginine 220 carries the omega-N-methylarginine modification. The segment at 227–410 (PTPAMQGASS…GKACQVAHCA (184 aa)) is interaction with SRCAP. A disordered region spans residues 266–290 (KMGITGNTSPFGQPFSQAGGQPMGA). Residues 270–284 (TGNTSPFGQPFSQAG) show a composition bias toward polar residues. The TAZ-type 1 zinc finger occupies 347 to 433 (DPEKRKLIQQ…RHDCPVCLPL (87 aa)). Residues histidine 363, cysteine 367, cysteine 380, cysteine 385, histidine 394, cysteine 398, cysteine 404, cysteine 409, histidine 418, cysteine 422, cysteine 427, and cysteine 430 each contribute to the Zn(2+) site. One can recognise a KIX domain in the interval 587 to 666 (GVRKGWHEHV…KIYKIQKELE (80 aa)). 2 positions are modified to asymmetric dimethylarginine: arginine 601 and arginine 625. Lysine 657 bears the N6-acetyllysine mark. Composition is skewed to polar residues over residues 794-805 (LPQNQFPSSSGA) and 814-823 (PAQTGVSQGQ). Positions 794–1083 (LPQNQFPSSS…STSPSQPRKK (290 aa)) are disordered. 2 stretches are compositionally biased toward pro residues: residues 844-860 (PCPP…PPPA) and 876-885 (GMTPPQPAAP). Low complexity-rich tracts occupy residues 886 to 929 (TQPS…VTPQ) and 937 to 952 (PSVA…PTPV). Residues 973 to 988 (PTPSSVASAETNSQQP) are compositionally biased toward polar residues. Lysine 998 participates in a covalent cross-link: Glycyl lysine isopeptide (Lys-Gly) (interchain with G-Cter in SUMO1). Residues 1011 to 1021 (GESKGEPRSEM) show a composition bias toward basic and acidic residues. Lysine 1014 is modified (N6-acetyllysine). Serine 1030 carries the post-translational modification Phosphoserine. The segment covering 1032 to 1059 (VKEETDIAEQKSEPMEVDEKKPEVKVEV) has biased composition (basic and acidic residues). Glycyl lysine isopeptide (Lys-Gly) (interchain with G-Cter in SUMO1) cross-links involve residues lysine 1033 and lysine 1056. The segment covering 1066 to 1078 (SSNGTASQSTSPS) has biased composition (low complexity). Serine 1076 carries the phosphoserine modification. The Bromo domain occupies 1085–1192 (FKPEELRQAL…EVFEQEIDPV (108 aa)). The tract at residues 1124 to 1170 (DYFDIVKNPMDLSTIKRKLDTGQYQEPWQYVDDVWLMFNNAWLYNRK) is interaction with histone. Residues 1162–1180 (NNAWLYNRKTSRVYKFCSK) are interaction with ASF1A. N6-acetyllysine is present on lysine 1216. Residues 1323–1700 (KFSAKRLQTT…MLVELHTQGQ (378 aa)) enclose the CBP/p300-type HAT domain. Residues serine 1382 and serine 1386 each carry the phosphoserine; by IKKA modification. Residues 1433–1435 (YLD) form an interaction with histone region. Residues 1434–1436 (LDS), 1446–1447 (RT), isoleucine 1493, arginine 1498, and tryptophan 1502 each bind acetyl-CoA. The interval 1460–1891 (YVKKLGYVTG…LPSPTSAPPG (432 aa)) is interaction with TRERF1. The span at 1556 to 1568 (LEQEEEERKKEES) shows a compositional bias: basic and acidic residues. The tract at residues 1556 to 1615 (LEQEEEERKKEESTAASETTEGSQGDSKNAKKKNNKKTNKNKSSISRANKKKPSMPNVSN) is disordered. Residues lysine 1583, lysine 1591, lysine 1592, lysine 1595, and lysine 1597 each carry the N6-acetyllysine modification. A compositionally biased stretch (basic residues) spans 1585–1595 (AKKKNNKKTNK). The segment at 1702–1750 (RFVYTCNECKHHVETRWHCTVCEDYDLCINCYNTKSHAHKMVKWGLGLD) adopts a ZZ-type zinc-finger fold. Residues cysteine 1707, cysteine 1710, cysteine 1720, cysteine 1723, cysteine 1729, cysteine 1732, histidine 1738, and histidine 1740 each coordinate Zn(2+). 2 positions are modified to N6-acetyllysine: lysine 1741 and lysine 1744. Position 1763 is a phosphoserine (serine 1763). A TAZ-type 2 zinc finger spans residues 1765 to 1846 (QESRRLSIQR…KCPVPFCLNI (82 aa)). 2 disordered regions span residues 1874–1959 (TRNV…VEAA) and 1977–2028 (INNS…PLPQ). The span at 1900 to 1912 (PQTPQPPAQPQPS) shows a compositional bias: pro residues. The segment covering 1925–1940 (ARTQPPTTVSTGKPTS) has biased composition (polar residues). Residues 1943-1954 (PAPPPPAQPPPA) show a composition bias toward pro residues. The span at 2018-2027 (PGQWQQAPLP) shows a compositional bias: low complexity. 3 positions are modified to phosphoserine: serine 2063, serine 2076, and serine 2079. 5 stretches are compositionally biased toward low complexity: residues 2112 to 2137 (QPGM…HQQP), 2146 to 2160 (QAGV…QQQA), 2196 to 2219 (QLLQ…QGSA), 2228 to 2263 (HGQF…SMGQ), and 2294 to 2305 (RILQQQQMKQQI). 2 disordered regions span residues 2112–2263 (QPGM…SMGQ) and 2294–2433 (RILQ…TTGD). Composition is skewed to polar residues over residues 2315 to 2327 (SPQQ…QPQA) and 2334 to 2343 (QIATSLSNQV). Over residues 2349–2372 (VQSPRPQSQPPHSSPSPRIQPQPS) the composition is skewed to pro residues. Serine 2351 is subject to Phosphoserine. The span at 2411-2424 (QLNTPSRSALSSEL) shows a compositional bias: polar residues.

As to quaternary structure, found in a complex containing NCOA2; NCOA3; IKKA; IKKB and IKBKG. Probably part of a complex with HIF1A and EP300. Interacts with GATA1; the interaction results in acetylation and enhancement of transcriptional activity of GATA1. Interacts with MAF and ZCCHC12. Interacts with DAXX; the interaction is dependent on CBP sumoylation and results in suppression of the transcriptional activity via recruitment of HDAC2 to DAXX. Interacts with phosphorylated CREB1. Interacts with CITED4 (C-terminal region). Interacts (via the TAZ-type 1 domain) with HIF1A. Interacts with SRCAP, CARM1, ELF3, MLLT7/FOXO4, N4BP2, NCOA1, NCOA3, NCOA6, PCAF, DDX5, DDX17, PELP1, PML, SMAD1, SMAD2, SMAD3, SPIB and TRERF1. Interacts with KLF1; the interaction results in acetylation of KLF1 and enhancement of its transcriptional activity. Interacts with MTDH. Interacts with NFATC4. Interacts with MAFG; the interaction acetylates MAFG in the basic region and stimulates NFE2 transcriptional activity through increasing its DNA-binding activity. Interacts with IRF2; the interaction acetylates IRF2 and regulates its activity on the H4 promoter. Interacts with IRF3 (when phosphorylated); forming the dsRNA-activated factor 1 (DRAF1), a complex which activates the transcription of the type I interferon genes. Interacts (via N-terminus) with SS18L1/CREST (via C-terminus). Interacts with MECOM. Interacts with CITED1 (via C-terminus). Interacts with FOXO1; the interaction acetylates FOXO1 and inhibits its transcriptional activity. Interacts with NPAS2, CLOCK and BMAL1. Interacts with ASF1A and ASF1B; this promotes histone acetylation. Interacts with acetylated TP53/p53 and with the acetylated histones H3 and H4. Interacts (via transactivation domain and C-terminus) with PCNA; the interaction occurs on chromatin in UV-irradiated damaged cells. Interacts with DHX9 (via N-terminus); this interaction mediates association with RNA polymerase II holoenzyme and stimulates CREB-dependent transcriptional activation. Interacts with SMAD4; negatively regulated by ZBTB7A. Interacts with DUX4 (via C-terminus). Forms a complex with KMT2A and CREB1. Interacts with DDX3X; this interaction may facilitate HNF4A acetylation. Interacts with MSX1; the interaction may inhibit MSX1 autoinactivation. Interacts with ACSS2. In terms of assembly, (Microbial infection) Interacts with HTLV-1 Tax, p30II and HBZ. (Microbial infection) Interacts with human herpes virus 8/HHV-8 protein vIRF-1; this interaction inhibits CREBBP binding to IRF3. As to quaternary structure, (Microbial infection) Interacts with HIV-1 Tat. Post-translationally, methylation of the KIX domain by CARM1 blocks association with CREB. This results in the blockade of CREB signaling, and in activation of apoptotic response. In terms of processing, phosphorylated by CHUK/IKKA at Ser-1382 and Ser-1386; these phosphorylations promote cell growth by switching the binding preference of CREBBP from TP53 to NF-kappa-B. Phosphorylated by _ at Ser-124 in response to DNA damage, promoting interaction with MRE11 and lactylation of MRE11. Sumoylation negatively regulates transcriptional activity via the recruitment of DAAX. Post-translationally, autoacetylation is required for binding to protein substrates, such as acetylated histones and acetylated TP53/p53. Autoacetylation is induced by glucose and fatty acids.

It localises to the cytoplasm. The protein localises to the nucleus. It carries out the reaction L-lysyl-[histone] + acetyl-CoA = N(6)-acetyl-L-lysyl-[histone] + CoA + H(+). The catalysed reaction is L-lysyl-[protein] + acetyl-CoA = N(6)-acetyl-L-lysyl-[protein] + CoA + H(+). The enzyme catalyses (S)-lactoyl-CoA + L-lysyl-[protein] = N(6)-[(S)-lactoyl]-L-lysyl-[protein] + CoA + H(+). Its function is as follows. Acetylates histones, giving a specific tag for transcriptional activation. Mediates acetylation of histone H3 at 'Lys-18' and 'Lys-27' (H3K18ac and H3K27ac, respectively). Also acetylates non-histone proteins, like DDX21, FBL, IRF2, MAFG, NCOA3, POLR1E/PAF53 and FOXO1. Binds specifically to phosphorylated CREB and enhances its transcriptional activity toward cAMP-responsive genes. Acts as a coactivator of ALX1. Acts as a circadian transcriptional coactivator which enhances the activity of the circadian transcriptional activators: NPAS2-BMAL1 and CLOCK-BMAL1 heterodimers. Acetylates PCNA; acetylation promotes removal of chromatin-bound PCNA and its degradation during nucleotide excision repair (NER). Acetylates POLR1E/PAF53, leading to decreased association of RNA polymerase I with the rDNA promoter region and coding region. Acetylates DDX21, thereby inhibiting DDX21 helicase activity. Acetylates FBL, preventing methylation of 'Gln-105' of histone H2A (H2AQ104me). In addition to protein acetyltransferase, can use different acyl-CoA substrates, such as lactoyl-CoA, and is able to mediate protein lactylation. Catalyzes lactylation of MRE11 in response to DNA damage, thereby promoting DNA double-strand breaks (DSBs) via homologous recombination (HR). Functions as a transcriptional coactivator for SMAD4 in the TGF-beta signaling pathway. This Homo sapiens (Human) protein is CREB-binding protein.